Here is a 392-residue protein sequence, read N- to C-terminus: uncharacterized protein (392 aa).

Positions 7-76 constitute a J domain; it reads TEYYDLLGIS…RSQYDQFGKE (70 aa). Residue serine 108 is modified to Phosphoserine.

This is an uncharacterized protein from Schizosaccharomyces pombe (strain 972 / ATCC 24843) (Fission yeast).